The sequence spans 593 residues: Elongation factor 4 (593 aa).

One can recognise a tr-type G domain in the interval 2–181 (DKIRNFCIIA…AVIERIPHPQ (180 aa)). Residues 14–19 (DHGKST) and 128–131 (NKCD) contribute to the GTP site.

The protein belongs to the TRAFAC class translation factor GTPase superfamily. Classic translation factor GTPase family. LepA subfamily.

Its subcellular location is the cell inner membrane. It carries out the reaction GTP + H2O = GDP + phosphate + H(+). Its function is as follows. Required for accurate and efficient protein synthesis under certain stress conditions. May act as a fidelity factor of the translation reaction, by catalyzing a one-codon backward translocation of tRNAs on improperly translocated ribosomes. Back-translocation proceeds from a post-translocation (POST) complex to a pre-translocation (PRE) complex, thus giving elongation factor G a second chance to translocate the tRNAs correctly. Binds to ribosomes in a GTP-dependent manner. The sequence is that of Elongation factor 4 from Bacteroides fragilis (strain ATCC 25285 / DSM 2151 / CCUG 4856 / JCM 11019 / LMG 10263 / NCTC 9343 / Onslow / VPI 2553 / EN-2).